We begin with the raw amino-acid sequence, 321 residues long: uncharacterized protein (321 aa).

The next 10 membrane-spanning stretches (helical) occupy residues 6-26 (LFIGALTCLVASMSWGAMFPV), 37-57 (FYFSFIRYGVVTIMLVILLLV), 72-92 (WIILFGVMAFTIYNVLIFLGQ), 100-120 (IMTASIAEALMPMLSIVILWG), 134-154 (ILIAFLGASMVITKGNISFFF), 160-180 (LFSILFIFIGVLGWVVYTMGG), 196-216 (CLFGTAITGIMTAILTAQGYV), 223-243 (VIAAIKYDFLFMITLPGIIAL), 255-275 (SINGILFINFVPITTLLIMVI), and 277-297 (GYNITAFDIVGTLFVIIGLIL). EamA domains lie at 18–146 (MSWG…MVIT) and 175–300 (VYTM…LNNI).

It belongs to the EamA transporter family.

The protein localises to the cell membrane. This is an uncharacterized protein from Bacillus subtilis (strain 168).